The sequence spans 88 residues: CLAVATA3/ESR (CLE)-related protein 42 (88 aa).

Residues 1-24 form the signal peptide; the sequence is MRSPHITISLVFLFFLFLIIQTHQ. Residues 69–88 form a disordered region; sequence KMIGANEHGVPSGPNPISNR. P79 and P82 each carry hydroxyproline. Residue P82 is glycosylated (O-linked (Ara...) hydroxyproline).

It belongs to the CLV3/ESR signal peptide family. The O-glycosylation (arabinosylation) of the hydroxyproline Pro-82 enhances binding affinity of the CLE42p peptide for its receptor. In terms of tissue distribution, expressed at low levels in seedlings, roots and inflorescence.

The protein localises to the secreted. It is found in the extracellular space. Its function is as follows. Extracellular signal peptide that regulates cell fate. Represses tracheary element differentiation but promotes the formation of procambial cells. The polypeptide is CLAVATA3/ESR (CLE)-related protein 42 (Arabidopsis thaliana (Mouse-ear cress)).